The chain runs to 530 residues: MVRRGLLGWISRVVILLVLLCCAISVLYMLACTPKGDQEQLGLPRANGPTGKDGYQAVLQEREEQHRNYVNSLKRQIAQLKDELQARSEQFRSGQDQASDATSLRSGWDREPKAQADLLAFLRGQVDKAEVHAGVKLATEYAAVPFDSFTLQKVYQLETGLTRHPEEKPVRKDKRDELVEAIESALESLNSPVESSPHQRPYTAADFIEGIYRTERDKGTLYELTFKGDHKHEFQRLVLFRPFGPIMKVKKEKLNLANTLINVIVPLARRVDKFRHFMQNFREMCIQQDGRVHLTVVYFGKEEMNEVKGILENTSKAANFRNFTFIQLNGEFSRGKGLDVGARFWKGSNVLLFFCDVDIYFTSEFLNTCRLNTQPGKKVFYPVLFSQYNPGVIYGHHDAVPPLGQQLVIKKETGFWRDFGFGMTCQYRSDFINIGGFDLDIKGWGGEDVHLYRKYLHSNLIVVRTPVRGLFHLWHEKHCMDELTPEQYKMCMQSKAMNEASHGQLGMLVFRHEIEAHLRKQKQKASSKKT.

The Cytoplasmic portion of the chain corresponds to M1–R12. The chain crosses the membrane as a helical; Signal-anchor for type II membrane protein span at residues V13–T33. At P34–T530 the chain is on the lumenal side. Residues A57 to S93 adopt a coiled-coil conformation. Residues S88 to G107 are disordered. Over residues F91 to R105 the composition is skewed to polar residues. N-linked (GlcNAc...) asparagine glycans are attached at residues N313 and N322. 2 residues coordinate a divalent metal cation: D358 and H475.

Belongs to the chondroitin N-acetylgalactosaminyltransferase family.

Its subcellular location is the golgi apparatus. The protein resides in the golgi stack membrane. It catalyses the reaction 3-O-(beta-D-GlcA-(1-&gt;3)-beta-D-Gal-(1-&gt;3)-beta-D-Gal-(1-&gt;4)-beta-D-Xyl)-L-seryl-[protein] + UDP-N-acetyl-alpha-D-galactosamine = 3-O-(beta-D-GalNAc-(1-&gt;4)-beta-D-GlcA-(1-&gt;3)-beta-D-Gal-(1-&gt;3)-beta-D-Gal-(1-&gt;4)-beta-D-Xyl)-L-seryl-[protein] + UDP + H(+). Its function is as follows. Transfers 1,4-N-acetylgalactosamine (GalNAc) from UDP-GalNAc to the non-reducing end of glucuronic acid (GlcUA). Required for addition of the first GalNAc to the core tetrasaccharide linker and for elongation of chondroitin chains. Important role in chondroitin chain biosynthesis in cartilage formation, and subsequent endochondral ossification. Moreover, is involved in the metabolism of aggrecan. The chain is Chondroitin sulfate N-acetylgalactosaminyltransferase 1 from Mus musculus (Mouse).